A 159-amino-acid polypeptide reads, in one-letter code: Probable E3 ubiquitin-protein ligase RHA1A (159 aa).

The segment at 86–130 adopts an RING-type; atypical zinc-finger fold; it reads CTVCLSDFESDDKVRQLPKCGHVFHHYCLDRWIVDYNKMKCPVCR.

Predominantly expressed in stems.

The catalysed reaction is S-ubiquitinyl-[E2 ubiquitin-conjugating enzyme]-L-cysteine + [acceptor protein]-L-lysine = [E2 ubiquitin-conjugating enzyme]-L-cysteine + N(6)-ubiquitinyl-[acceptor protein]-L-lysine.. It functions in the pathway protein modification; protein ubiquitination. In terms of biological role, probable E3 ubiquitin-protein ligase that may possess E3 ubiquitin ligase activity in vitro. This is Probable E3 ubiquitin-protein ligase RHA1A from Arabidopsis thaliana (Mouse-ear cress).